We begin with the raw amino-acid sequence, 413 residues long: Floricaula/leafy homolog 1 (413 aa).

2 disordered regions span residues 154–177 (EGLS…GGTT) and 191–239 (QRRR…RQRE). Residues 201 to 210 (GRERRGRASA) are compositionally biased toward basic and acidic residues. Positions 211 to 225 (EEDEETEEGQEDEWN) are enriched in acidic residues. 3 consecutive DNA-binding regions follow at residues 238 to 242 (REHPF), 307 to 314 (NKPKMRHY), and 378 to 381 (YVPT).

This sequence belongs to the FLO/LFY family. As to expression, expressed in floral meristems and in indeterminate vegetative meristems.

It is found in the nucleus. Probable transcription factor that act to specify determinacy in the progenitor cells for both flowers and leaves. The sequence is that of Floricaula/leafy homolog 1 (FL1) from Nicotiana tabacum (Common tobacco).